The following is a 44-amino-acid chain: pyr operon leader peptide (44 aa).

The sequence is that of pyr operon leader peptide (pyrL) from Escherichia coli O157:H7.